The primary structure comprises 445 residues: tRNA-2-methylthio-N(6)-dimethylallyladenosine synthase (445 aa).

In terms of domain architecture, MTTase N-terminal spans 3-124; it reads KNLYIKTYGC…LPELISKIVR (122 aa). Residues C12, C48, C87, C162, C166, and C169 each contribute to the [4Fe-4S] cluster site. The 233-residue stretch at 148–380 folds into the Radical SAM core domain; sequence YPQGASSFIS…QKELMDQQLA (233 aa). The TRAM domain occupies 383-445; that stretch reads ESCVGSTIKV…SLNSLTGEIL (63 aa).

This sequence belongs to the methylthiotransferase family. MiaB subfamily. As to quaternary structure, monomer. [4Fe-4S] cluster is required as a cofactor.

Its subcellular location is the cytoplasm. It catalyses the reaction N(6)-dimethylallyladenosine(37) in tRNA + (sulfur carrier)-SH + AH2 + 2 S-adenosyl-L-methionine = 2-methylsulfanyl-N(6)-dimethylallyladenosine(37) in tRNA + (sulfur carrier)-H + 5'-deoxyadenosine + L-methionine + A + S-adenosyl-L-homocysteine + 2 H(+). Its function is as follows. Catalyzes the methylthiolation of N6-(dimethylallyl)adenosine (i(6)A), leading to the formation of 2-methylthio-N6-(dimethylallyl)adenosine (ms(2)i(6)A) at position 37 in tRNAs that read codons beginning with uridine. The chain is tRNA-2-methylthio-N(6)-dimethylallyladenosine synthase from Rickettsia akari (strain Hartford).